We begin with the raw amino-acid sequence, 475 residues long: MKYIFAPPANKGLQQLNHALFESSHTLPALKIPAHASGIAMETLRSHILVAPRLRTIVDDPTDKKWRLLLLDPSMEASEINDLPNPLKEFALKHEAKLVKHTIELKYDYWTSDQVLRSILPDEMETPGAFETVGHIAHLNLRDRYQPFKHIIGQVILDKSSHIKTVVNKLDNIDHTFRFFQMEILAGINDMNAKLKEGGCFFHFDFSKVYWNSRLQGEHDRIIKLFGQNDLICDVFAGVGPFALPAAKHKRCVVFANDLNPQSFKYLMENIKLNKLETRILPFNMDGRQFIKQSLEDLNNPAIWNKITKQKPTSNDKKRNRKVESPTVAPLTDQPAISGIRHFKHYVMNLPATAIEFLDAFHGLYSGMRDVIMDSDLPTIHCHCFSNAKDVKADVIERVERVIGMPLGSNLIMVHSVRTVAPNKDMLCISFRLPSALAFAEPKILGKRKGLETEENLVSQSDVSKSSDNILEKDT.

S-adenosyl-L-methionine-binding positions include His-219, 258–259, and 286–287; these read DL and DG. Positions 306–328 are disordered; that stretch reads KITKQKPTSNDKKRNRKVESPTV. Residue Asn-349 coordinates S-adenosyl-L-methionine. Residues 456 to 469 show a composition bias toward polar residues; sequence NLVSQSDVSKSSDN. The disordered stretch occupies residues 456–475; it reads NLVSQSDVSKSSDNILEKDT.

Belongs to the class I-like SAM-binding methyltransferase superfamily. TRM5/TYW2 family. Monomer.

The protein resides in the mitochondrion matrix. Its subcellular location is the nucleus. The protein localises to the cytoplasm. The enzyme catalyses guanosine(37) in tRNA + S-adenosyl-L-methionine = N(1)-methylguanosine(37) in tRNA + S-adenosyl-L-homocysteine + H(+). Its function is as follows. Specifically methylates the N1 position of guanosine-37 in various cytoplasmic and mitochondrial tRNAs. Methylation is not dependent on the nature of the nucleoside 5' of the target nucleoside. This is the first step in the biosynthesis of wybutosine (yW), a modified base adjacent to the anticodon of tRNAs and required for accurate decoding. This Batrachochytrium dendrobatidis (strain JAM81 / FGSC 10211) (Frog chytrid fungus) protein is tRNA (guanine(37)-N(1))-methyltransferase.